A 102-amino-acid chain; its full sequence is MKVTDVRLRKIQTDGRMKALVSITLDEAFVIHDLRVIEGNSGLFVAMPSKRTPDGEFRDIAHPINSDMRQEIQDAVMKVYDETDEVIPDKNATSDNEESDEA.

The disordered stretch occupies residues 83–102 (TDEVIPDKNATSDNEESDEA).

It belongs to the SpoVG family.

Its function is as follows. Could be involved in septation. This Staphylococcus epidermidis (strain ATCC 35984 / DSM 28319 / BCRC 17069 / CCUG 31568 / BM 3577 / RP62A) protein is Putative septation protein SpoVG.